The primary structure comprises 336 residues: Glucokinase (336 aa).

Residue Ala12–Thr17 participates in ATP binding.

Belongs to the bacterial glucokinase family.

Its subcellular location is the cytoplasm. It carries out the reaction D-glucose + ATP = D-glucose 6-phosphate + ADP + H(+). This chain is Glucokinase, found in Helicobacter pylori (strain J99 / ATCC 700824) (Campylobacter pylori J99).